A 384-amino-acid polypeptide reads, in one-letter code: MVTEDFYKYQVWYFQILGVWQLPTWAADHQRRFQSMRFGFILVILFIMLLLFSFEMLNNISQVREILKVFFMFATEISCMAKLLHLKLKSRKLAGLVDAMLSPEFGVKSEQEMQMLELDRVAVVRMRNSYGIMSLGAASLILIVPCFDNFGELPLAMLEVCSIEGWICYWSQYLFHSICLLPTCVLNITYDSVAYSLLCFLKVQLQMLVLRLEKLGPVIEPQDNEKIAMELRECAAYYNRIVRFKDLVELFIKGPGSVQLMCSVLVLVSNLYDMSTMSIANGDAIFMLKTCIYQLVMLWQIFIICYASNEVTVQSSRLCHSIYSSQWTGWNRANRRIVLLMMQRFNSPMLLSTFNPTFAFSLEAFGSIVNCSYSYFALLKRVNS.

Topologically, residues 1 to 37 (MVTEDFYKYQVWYFQILGVWQLPTWAADHQRRFQSMR) are cytoplasmic. The helical transmembrane segment at 38–58 (FGFILVILFIMLLLFSFEMLN) threads the bilayer. N-linked (GlcNAc...) asparagine glycosylation is present at N59. The Extracellular portion of the chain corresponds to 59-65 (NISQVRE). Residues 66-86 (ILKVFFMFATEISCMAKLLHL) traverse the membrane as a helical segment. Residues 87–130 (KLKSRKLAGLVDAMLSPEFGVKSEQEMQMLELDRVAVVRMRNSY) are Cytoplasmic-facing. A helical membrane pass occupies residues 131–151 (GIMSLGAASLILIVPCFDNFG). The Extracellular segment spans residues 152 to 165 (ELPLAMLEVCSIEG). Residues 166–186 (WICYWSQYLFHSICLLPTCVL) traverse the membrane as a helical segment. At 187-247 (NITYDSVAYS…YNRIVRFKDL (61 aa)) the chain is on the cytoplasmic side. A helical transmembrane segment spans residues 248-268 (VELFIKGPGSVQLMCSVLVLV). The Extracellular segment spans residues 269 to 283 (SNLYDMSTMSIANGD). A helical transmembrane segment spans residues 284–304 (AIFMLKTCIYQLVMLWQIFII). The Cytoplasmic segment spans residues 305-348 (CYASNEVTVQSSRLCHSIYSSQWTGWNRANRRIVLLMMQRFNSP). The chain crosses the membrane as a helical span at residues 349–369 (MLLSTFNPTFAFSLEAFGSIV). Residue N370 is glycosylated (N-linked (GlcNAc...) asparagine). At 370 to 384 (NCSYSYFALLKRVNS) the chain is on the extracellular side.

Belongs to the insect chemoreceptor superfamily. Heteromeric odorant receptor channel (TC 1.A.69) family. Or2a subfamily. In terms of assembly, interacts with Orco. Complexes exist early in the endomembrane system in olfactory sensory neurons (OSNs), coupling these complexes to the conserved ciliary trafficking pathway. Isoform B is expressed in the antenna.

Its subcellular location is the cell membrane. In terms of biological role, odorant receptor which mediates acceptance or avoidance behavior, depending on its substrates. The odorant receptor repertoire encodes a large collection of odor stimuli that vary widely in identity, intensity, and duration. May form a complex with Orco to form odorant-sensing units, providing sensitive and prolonged odorant signaling and calcium permeability. The sequence is that of Odorant receptor 46a, isoform B (Or46a) from Drosophila melanogaster (Fruit fly).